The following is a 161-amino-acid chain: Cyclic pyranopterin monophosphate synthase (161 aa).

Substrate-binding positions include 75–77 (MCH) and 115–116 (ME). Residue Asp130 is part of the active site.

The protein belongs to the MoaC family. As to quaternary structure, homohexamer; trimer of dimers.

It carries out the reaction (8S)-3',8-cyclo-7,8-dihydroguanosine 5'-triphosphate = cyclic pyranopterin phosphate + diphosphate. Its pathway is cofactor biosynthesis; molybdopterin biosynthesis. In terms of biological role, catalyzes the conversion of (8S)-3',8-cyclo-7,8-dihydroguanosine 5'-triphosphate to cyclic pyranopterin monophosphate (cPMP). This Bacillus cereus (strain 03BB102) protein is Cyclic pyranopterin monophosphate synthase.